The following is a 122-amino-acid chain: Large ribosomal subunit protein uL18 (122 aa).

This sequence belongs to the universal ribosomal protein uL18 family. In terms of assembly, part of the 50S ribosomal subunit; part of the 5S rRNA/L5/L18/L25 subcomplex. Contacts the 5S and 23S rRNAs.

Functionally, this is one of the proteins that bind and probably mediate the attachment of the 5S RNA into the large ribosomal subunit, where it forms part of the central protuberance. In Mycobacterium tuberculosis (strain ATCC 25177 / H37Ra), this protein is Large ribosomal subunit protein uL18.